The primary structure comprises 133 residues: Large ribosomal subunit protein eL32 (133 aa).

This sequence belongs to the eukaryotic ribosomal protein eL32 family.

The polypeptide is Large ribosomal subunit protein eL32 (rpl32) (Dictyostelium discoideum (Social amoeba)).